Here is a 98-residue protein sequence, read N- to C-terminus: Integration host factor subunit beta (98 aa).

It belongs to the bacterial histone-like protein family. Heterodimer of an alpha and a beta chain.

In terms of biological role, this protein is one of the two subunits of integration host factor, a specific DNA-binding protein that functions in genetic recombination as well as in transcriptional and translational control. The chain is Integration host factor subunit beta from Marinobacter nauticus (strain ATCC 700491 / DSM 11845 / VT8) (Marinobacter aquaeolei).